The sequence spans 153 residues: 17.6 kDa class I heat shock protein (153 aa).

The sHSP domain occupies 38–153 (ETAAIVNARI…PMVKAIDISG (116 aa)).

The protein belongs to the small heat shock protein (HSP20) family. Forms oligomeric structures.

Its subcellular location is the cytoplasm. The chain is 17.6 kDa class I heat shock protein (HSP17.6) from Helianthus annuus (Common sunflower).